Here is a 594-residue protein sequence, read N- to C-terminus: TOX high mobility group box family member 4-B (594 aa).

2 disordered regions span residues 160–225 (GTIL…PQKP) and 522–545 (ESPP…SPQC). A compositionally biased stretch (basic residues) spans 207–217 (KPKTPKKKKKK). The Nuclear localization signal signature appears at 212–217 (KKKKKK). The segment at residues 222–290 (PQKPLSAYAL…EYLKALALYK (69 aa)) is a DNA-binding region (HMG box).

As to quaternary structure, component of the PNUTS-PP1 phosphatase complex.

The protein localises to the nucleus. Its subcellular location is the chromosome. In terms of biological role, transcription factor that modulates cell fate reprogramming from the somatic state to the pluripotent and neuronal fate. Also acts as a regulatory component of protein phosphatase 1 (PP1) complexes. Component of the PNUTS-PP1 protein phosphatase complex, a PP1 complex that regulates RNA polymerase II transcription pause-release. PNUTS-PP1 also plays a role in the control of chromatin structure and cell cycle progression during the transition from mitosis into interphase. This chain is TOX high mobility group box family member 4-B (tox4-b), found in Xenopus laevis (African clawed frog).